The primary structure comprises 65 residues: U15-hexatoxin-Mg1a (65 aa).

Contains 4 disulfide bonds. In terms of tissue distribution, expressed by the venom gland.

It is found in the secreted. Its function is as follows. Intrathorax injection into crickets causes paralysis prolonged for more than 60 minutes, followed by recovery. The sequence is that of U15-hexatoxin-Mg1a from Macrothele gigas (Japanese funnel web spider).